A 353-amino-acid chain; its full sequence is Guanine nucleotide-binding protein subunit alpha (353 aa).

The interval 1–26 is disordered; it reads MGCGMSTEEKEGKARNEEIENQLKRD. Gly-2 carries N-myristoyl glycine lipidation. A lipid anchor (S-palmitoyl cysteine) is attached at Cys-3. Residues 7-26 show a composition bias toward basic and acidic residues; it reads TEEKEGKARNEEIENQLKRD. The G-alpha domain maps to 32–353; sequence NEIKMLLLGA…QENLRLCGLI (322 aa). Residues 35 to 48 are G1 motif; that stretch reads KMLLLGAGESGKST. Positions 43, 44, 45, 46, 47, 48, 150, 175, 181, 203, 269, 270, 272, and 325 each coordinate GTP. Ser-47 is a Mg(2+) binding site. Positions 173 to 181 are G2 motif; that stretch reads DVLRSRVKT. Thr-181 lines the Mg(2+) pocket. The interval 196–205 is G3 motif; sequence YRMFDVGGQR. Residues 265–272 are G4 motif; it reads ILFLNKID. Residues 323–328 form a G5 motif region; the sequence is TCATDT.

This sequence belongs to the G-alpha family. G(q) subfamily. In terms of assembly, g proteins are composed of 3 units; alpha, beta and gamma. The alpha chain contains the guanine nucleotide binding site. The cofactor is Mg(2+).

Functionally, guanine nucleotide-binding proteins (G proteins) are involved as modulators or transducers in various transmembrane signaling systems. This Cryphonectria parasitica (Chestnut blight fungus) protein is Guanine nucleotide-binding protein subunit alpha.